Reading from the N-terminus, the 275-residue chain is Myb/SANT-like DNA-binding domain-containing protein 3 (275 aa).

One can recognise a Myb-like domain in the interval 13 to 78 (FSELEKSILL…QLKKCWENIK (66 aa)). Phosphoserine occurs at positions 96 and 98. Residue K154 forms a Glycyl lysine isopeptide (Lys-Gly) (interchain with G-Cter in SUMO2) linkage. A coiled-coil region spans residues 211 to 247 (QLIQMNEVHVAKIQQIERECEMAEEEHRIKMEVLNKK). S274 bears the Phosphoserine mark.

It belongs to the MSANTD3 family. As to expression, expressed in brain.

This chain is Myb/SANT-like DNA-binding domain-containing protein 3 (MSANTD3), found in Homo sapiens (Human).